Reading from the N-terminus, the 420-residue chain is Chaperone protein dnaJ 3 (420 aa).

In terms of domain architecture, J spans 14–75 (KFYEILGVPK…EKREIYDQYG (62 aa)). A CR-type zinc finger spans residues 135–219 (GTMKKLSLSR…CKGDKVIPEK (85 aa)). Zn(2+) contacts are provided by Cys148, Cys151, Cys164, Cys167, Cys191, Cys194, Cys207, and Cys210. CXXCXGXG motif repeat units lie at residues 148 to 155 (CSKCNGKG), 164 to 171 (CGGCQGSG), 191 to 198 (CNECKGTG), and 207 to 214 (CPQCKGDK). The interval 376–420 (ETTLHDVNIEDEMRRKAQAQREAYDDDDEDDDHPGGAQRVQCAQQ) is disordered. Basic and acidic residues predominate over residues 377–390 (TTLHDVNIEDEMRR). Residue Cys417 is modified to Cysteine methyl ester. The S-farnesyl cysteine moiety is linked to residue Cys417. A propeptide spans 418-420 (AQQ) (removed in mature form).

The protein belongs to the DnaJ family. A/I subfamily. As to quaternary structure, homodimer. Zn(2+) serves as cofactor. Post-translationally, farnesylated. Roots, shoots, flowers, siliques and cotyledons.

Its subcellular location is the membrane. Its function is as follows. Plays a continuous role in plant development probably in the structural organization of compartments. The chain is Chaperone protein dnaJ 3 (ATJ3) from Arabidopsis thaliana (Mouse-ear cress).